Reading from the N-terminus, the 120-residue chain is Flagellar protein FliT (120 aa).

Residues Met-1–Asn-50 form a required for homodimerization region. The tract at residues Leu-59–Lys-97 is fliD binding.

This sequence belongs to the FliT family. In terms of assembly, homodimer. Interacts with FliD and FlhC.

It is found in the cytoplasm. The protein resides in the cytosol. In terms of biological role, dual-function protein that regulates the transcription of class 2 flagellar operons and that also acts as an export chaperone for the filament-capping protein FliD. As a transcriptional regulator, acts as an anti-FlhDC factor; it directly binds FlhC, thus inhibiting the binding of the FlhC/FlhD complex to class 2 promoters, resulting in decreased expression of class 2 flagellar operons. As a chaperone, effects FliD transition to the membrane by preventing its premature polymerization, and by directing it to the export apparatus. The polypeptide is Flagellar protein FliT (Citrobacter koseri (strain ATCC BAA-895 / CDC 4225-83 / SGSC4696)).